We begin with the raw amino-acid sequence, 268 residues long: Interleukin-1 alpha (268 aa).

Positions 1-112 (MAKVPDLFED…DTEEEIIKPR (112 aa)) are excised as a propeptide. Position 82 is an N6-acetyllysine (lysine 82). A nuclear localization signal (NLS) region spans residues 82–86 (KKRRL). Phosphoserine is present on serine 87. Asparagine 102 and asparagine 141 each carry an N-linked (GlcNAc...) asparagine glycan.

It belongs to the IL-1 family. Monomer. Interacts with TMED10; the interaction mediates the translocation from the cytoplasm into the ERGIC (endoplasmic reticulum-Golgi intermediate compartment) and thereby secretion. Interacts with IL1R1. Interacts with S100A13; this interaction is the first step in the export of IL1A, followed by direct translocation of this complex across the plasma membrane. Acetylated within its nuclear localization sequence, which impacts subcellular localization. Post-translationally, proteolytic processed by CAPN1 in a calcium-dependent manner. Cleavage from 31 kDa precursor to 18 kDa biologically active molecules. In terms of processing, phosphorylated. Phosphorylation greatly enhances susceptibility to digestion and promotes the conversion of pre-IL1A alpha to the biologically active IL1A.

The protein resides in the nucleus. It localises to the cytoplasm. It is found in the secreted. In terms of biological role, cytokine constitutively present intracellularly in nearly all resting non-hematopoietic cells that plays an important role in inflammation and bridges the innate and adaptive immune systems. After binding to its receptor IL1R1 together with its accessory protein IL1RAP, forms the high affinity interleukin-1 receptor complex. Signaling involves the recruitment of adapter molecules such as MYD88, IRAK1 or IRAK4. In turn, mediates the activation of NF-kappa-B and the three MAPK pathways p38, p42/p44 and JNK pathways. Within the cell, acts as an alarmin and cell death results in its liberation in the extracellular space after disruption of the cell membrane to induce inflammation and alert the host to injury or damage. In addition to its role as a danger signal, which occurs when the cytokine is passively released by cell necrosis, directly senses DNA damage and acts as signal for genotoxic stress without loss of cell integrity. The sequence is that of Interleukin-1 alpha (IL1A) from Lama glama (Llama).